Reading from the N-terminus, the 214-residue chain is Ribonuclease S-2 (214 aa).

Positions 1-22 (MSKSQLTSVFFILLCALSPIYG) are cleaved as a signal peptide. Cys38 and Cys43 form a disulfide bridge. Residue Asn49 is glycosylated (N-linked (GlcNAc...) asparagine). The active-site Proton donor is His53. An RNA-binding site is contributed by His53. An N-linked (GlcNAc...) asparagine glycan is attached at Asn59. A disulfide bridge connects residues Cys67 and Cys116. Residues 91-92 (DL), Lys94, and Phe105 contribute to the RNA site. Glu109 is an active-site residue. 112–113 (KH) provides a ligand contact to RNA. His113 acts as the Proton acceptor in catalysis. N-linked (GlcNAc...) asparagine glycosylation is present at Asn160. Cystine bridges form between Cys175-Cys204 and Cys187-Cys198.

The protein belongs to the RNase T2 family.

It localises to the secreted. The protein resides in the extracellular space. The enzyme catalyses a ribonucleotidyl-ribonucleotide-RNA + H2O = a 3'-end 3'-phospho-ribonucleotide-RNA + a 5'-end dephospho-ribonucleoside-RNA + H(+). Self-incompatibility (SI) is the inherited ability of a flowering plant to prevent self-fertilization by discriminating between self and non-self pollen during pollination. In many species of the Solanaceae, self-incompatibility is controlled by the single, multiallelic locus S. This stylar glycoprotein is associated with expression of self-incompatibility in potato. The polypeptide is Ribonuclease S-2 (S-2) (Nicotiana alata (Winged tobacco)).